The sequence spans 107 residues: Cytochrome c2 (107 aa).

Position 1 is a pyrrolidone carboxylic acid (Gln1). Heme c-binding residues include Cys13, Cys16, His17, and Met79.

This sequence belongs to the cytochrome c family. Post-translationally, binds 1 heme c group covalently per subunit.

The protein localises to the periplasm. Its function is as follows. Cytochrome c2 is found mainly in purple, non-sulfur, photosynthetic bacteria where it functions as the electron donor to the oxidized bacteriochlorophyll in the photophosphorylation pathway. However, it may also have a role in the respiratory chain and is found in some non-photosynthetic bacteria. In Rhodoplanes tepidamans (Rhodoplanes cryptolactis), this protein is Cytochrome c2.